The following is a 252-amino-acid chain: MVEDSRVRDALKGGDQKALPASLVPQAPPVLTSKDKITKRMIVVLAMASLETHKISSNGPGGDKYVLLNCDDHQGLLKKMGRDISEARPDITHQCLLTLLDSPINKAGKLQVYIQTSRGILIEVNPTVRIPRTFKRFSGLMVQLLHKLSIRSVNSEEKLLKVIKNPITDHLPTKCRKVTLSFDAPVIRVQDYIEKLDDDESICVFVGAMARGKDNFADEYVDEKVGLSNYPLSASVACSKFCHGAEDAWNIL.

Residues Leu180, Gly207, 212–214 (GKD), and 227–232 (LSNYPL) each bind S-adenosyl-L-methionine.

The protein belongs to the class IV-like SAM-binding methyltransferase superfamily. RNA methyltransferase NEP1 family. In terms of assembly, homodimer. Interacts with snoRNA U3. Interacts with NOP14 and MPP10. Component of the ribosomal small subunit (SSU) processome composed of at least 40 protein subunits and snoRNA U3.

The protein localises to the nucleus. The protein resides in the nucleolus. The enzyme catalyses pseudouridine(1191) in yeast 18S rRNA + S-adenosyl-L-methionine = N(1)-methylpseudouridine(1191) in yeast 18S rRNA + S-adenosyl-L-homocysteine + H(+). Functionally, S-adenosyl-L-methionine-dependent pseudouridine N(1)-methyltransferase that methylates pseudouridine at position 1189 (Psi1189) in 18S rRNA. Involved the biosynthesis of the hypermodified N1-methyl-N3-(3-amino-3-carboxypropyl) pseudouridine (m1acp3-Psi) conserved in eukaryotic 18S rRNA. N1-methylation is independent on acp-modification at the N3-position of U1191. Also has an essential role in 40S ribosomal subunit biogenesis independent on its methyltransferase activity, facilitating the incorporation of ribosomal protein S19 (RPS19A/RPS19B) during the formation of pre-ribosomes. This chain is Ribosomal RNA small subunit methyltransferase NEP1, found in Saccharomyces cerevisiae (strain ATCC 204508 / S288c) (Baker's yeast).